We begin with the raw amino-acid sequence, 675 residues long: Pesticidal crystal protein Cry10Aa (675 aa).

This sequence belongs to the delta endotoxin family.

Functionally, promotes colloidosmotic lysis by binding to the midgut epithelial cells of mosquitos. Active on Aedes aegypti. The protein is Pesticidal crystal protein Cry10Aa (cry10Aa) of Bacillus thuringiensis subsp. israelensis.